Reading from the N-terminus, the 425-residue chain is MAFLALGINHKTASVDVRERVAFTPEQLVDALQQLCRLTASREAAILSTCNRSELYIEQDQLSAEAVLQWLADYHRLSLDELRASAYIHEEHDAVRHMMRVASGLDSLVLGEPQILGQMKSAYAVAREAGTVGPLLGRLFQATFSAAKQVRTDTAIGENPVSVAFAAVSLARQIFSDLGRSQALLIGAGETITLVARHLHEQGVRRIVVANRTLERASLLAEQFGAHAVLLADIPQELAHSDIVISSTASQLPILGKGAVESALKQRRHKPIFMVDIAVPRDIEPEVGELDDVYLYTVDDLHEVVAENLKSRQGAAQAAEELVSVGAEDFMVRLRELAAVDVLRAYRQQSERLRDEELQKAQRLLANGGNPEDVLAQLARGLTNKLLHAPSVQLKKLSAEGRLDALAMAQELFALNEGSTDKSLQ.

Substrate is bound by residues 49-52 (TCNR), Ser-107, 112-114 (EPQ), and Gln-118. Cys-50 (nucleophile) is an active-site residue. 187–192 (GAGETI) provides a ligand contact to NADP(+).

It belongs to the glutamyl-tRNA reductase family. As to quaternary structure, homodimer.

It catalyses the reaction (S)-4-amino-5-oxopentanoate + tRNA(Glu) + NADP(+) = L-glutamyl-tRNA(Glu) + NADPH + H(+). The protein operates within porphyrin-containing compound metabolism; protoporphyrin-IX biosynthesis; 5-aminolevulinate from L-glutamyl-tRNA(Glu): step 1/2. Its function is as follows. Catalyzes the NADPH-dependent reduction of glutamyl-tRNA(Glu) to glutamate 1-semialdehyde (GSA). The sequence is that of Glutamyl-tRNA reductase from Pseudomonas putida (strain W619).